The chain runs to 563 residues: Putative cysteine ligase BshC (563 aa).

Positions 474-506 form a coiled coil; sequence LEQSLMGTSKQAEKALDTLRQKTQRANRRKHDE.

The protein belongs to the BshC family.

This Prosthecochloris aestuarii (strain DSM 271 / SK 413) protein is Putative cysteine ligase BshC.